Consider the following 336-residue polypeptide: Vacuolar protein sorting-associated protein 26B (336 aa).

Ser-302, Ser-304, and Ser-319 each carry phosphoserine.

It belongs to the VPS26 family. Component of the heterotrimeric retromer cargo-selective complex (CSC), also described as vacuolar protein sorting VPS subcomplex (VPS,) formed by VPS26 (VPS26A or VPS26B), VPS29 and VPS35. The CSC has a highly elongated structure with VPS26 and VPS29 binding independently at opposite distal ends of VPS35 as central platform. The CSC is believed to associate with variable sorting nexins to form functionally distinct retromer complex variants. The originally described retromer complex (also called SNX-BAR retromer) is a pentamer containing the CSC and a heterodimeric membrane-deforming subcomplex formed between SNX1 or SNX2 and SNX5 or SNX6 (also called SNX-BAR subcomplex); the respective CSC and SNX-BAR subcomplexes associate with low affinity. The CSC associates with SNX3 to form a SNX3-retromer complex. The CSC associates with SNX27, the WASH complex and the SNX-BAR subcomplex to form the SNX27-retromer complex. Interacts with VPS29, VPS35, TBC1D5, GOLPH3, SNX27.

It localises to the cytoplasm. Its subcellular location is the membrane. The protein localises to the early endosome. The protein resides in the late endosome. Functionally, acts as a component of the retromer cargo-selective complex (CSC). The CSC is believed to be the core functional component of retromer or respective retromer complex variants acting to prevent missorting of selected transmembrane cargo proteins into the lysosomal degradation pathway. The recruitment of the CSC to the endosomal membrane involves RAB7A and SNX3. The SNX-BAR retromer mediates retrograde transport of cargo proteins from endosomes to the trans-Golgi network (TGN) and is involved in endosome-to-plasma membrane transport for cargo protein recycling. The SNX3-retromer mediates the retrograde transport of WLS distinct from the SNX-BAR retromer pathway. The SNX27-retromer is believed to be involved in endosome-to-plasma membrane trafficking and recycling of a broad spectrum of cargo proteins. The CSC seems to act as recruitment hub for other proteins, such as the WASH complex and TBC1D5. May be involved in retrograde transport of SORT1 but not of IGF2R. Acts redundantly with VSP26A in SNX-27 mediated endocytic recycling of SLC2A1/GLUT1. The polypeptide is Vacuolar protein sorting-associated protein 26B (VPS26B) (Homo sapiens (Human)).